The primary structure comprises 235 residues: Centromere protein H (235 aa).

A disordered region spans residues 1 to 23 (MAGRLSESVGSGPGAEAETAADP). A coiled-coil region spans residues 125 to 145 (EIIQAHQQARVIRENLNDIRR).

It belongs to the CENP-H/MCM16 family. As to quaternary structure, component of the CENPA-HI complex, at least composed of CENPH, CENPI, CENPK, CENPL, CENPM, CENPO and CENPP. Interacts with NDC80.

It localises to the nucleus. The protein localises to the chromosome. Its subcellular location is the centromere. It is found in the kinetochore. Its function is as follows. Component of the CENPA-HI complex, a centromeric complex involved in assembly of kinetochore proteins, mitotic progression and chromosome segregation. Required for the localization of CENPC but not CENPA to the centromere. It however may be involved in incorporation of newly synthesized CENPA into centromeres via its interaction with the CENPA-NAC complex. This is Centromere protein H (CENPH) from Gallus gallus (Chicken).